A 101-amino-acid chain; its full sequence is Enhancer of yellow 2 transcription factor (101 aa).

The protein belongs to the ENY2 family. In terms of assembly, component of the nuclear pore complex (NPC)-associated AMEX complex (anchoring and mRNA export complex), composed of at least e(y)2 and xmas-2. Component of the SAGA transcription coactivator-HAT complexes, at least composed of Ada2b, e(y)2, Pcaf/Gcn5, Taf10 and Nipped-A/Trrap. Within the SAGA complex, e(y)2, Sgf11, and not/nonstop form an additional subcomplex of SAGA called the DUB module (deubiquitination module). Component of the THO complex, composed of at least e(y)2, HPR1, THO2, THOC5, THOC6 and THOC7. Interacts with e(y)1. Interacts with su(Hw) (via zinc fingers). Interacts with xmas-2; required for localization to the nuclear periphery. Interacts with the nuclear pore complex (NPC).

It localises to the nucleus. The protein resides in the nucleoplasm. The protein localises to the cytoplasm. Involved in mRNA export coupled transcription activation by association with both the AMEX and the SAGA complexes. The SAGA complex is a multiprotein complex that activates transcription by remodeling chromatin and mediating histone acetylation and deubiquitination. Within the SAGA complex, participates in a subcomplex that specifically deubiquitinates histone H2B. The SAGA complex is recruited to specific gene promoters by activators, where it is required for transcription. Required for nuclear receptor-mediated transactivation. Involved in transcription elongation by recruiting the THO complex onto nascent mRNA. The AMEX complex functions in docking export-competent ribonucleoprotein particles (mRNPs) to the nuclear entrance of the nuclear pore complex (nuclear basket). AMEX participates in mRNA export and accurate chromatin positioning in the nucleus by tethering genes to the nuclear periphery. In Drosophila sechellia (Fruit fly), this protein is Enhancer of yellow 2 transcription factor.